The chain runs to 116 residues: Nucleoid-associated protein P9301_00191 (116 aa).

It belongs to the YbaB/EbfC family. Homodimer.

It is found in the cytoplasm. Its subcellular location is the nucleoid. Binds to DNA and alters its conformation. May be involved in regulation of gene expression, nucleoid organization and DNA protection. The sequence is that of Nucleoid-associated protein P9301_00191 from Prochlorococcus marinus (strain MIT 9301).